Here is a 950-residue protein sequence, read N- to C-terminus: RNA polymerase-associated protein RapA (950 aa).

The 169-residue stretch at 165-333 (EVADRMAPRV…FARLRLLDPN (169 aa)) folds into the Helicase ATP-binding domain. Residue 178-185 (DEVGLGKT) coordinates ATP. The short motif at 279-282 (DEAH) is the DEAH box element. One can recognise a Helicase C-terminal domain in the interval 475-629 (RVEWLIDTLK…TCPTGNALQH (155 aa)).

Belongs to the SNF2/RAD54 helicase family. RapA subfamily. Interacts with the RNAP. Has a higher affinity for the core RNAP than for the holoenzyme. Its ATPase activity is stimulated by binding to RNAP.

Functionally, transcription regulator that activates transcription by stimulating RNA polymerase (RNAP) recycling in case of stress conditions such as supercoiled DNA or high salt concentrations. Probably acts by releasing the RNAP, when it is trapped or immobilized on tightly supercoiled DNA. Does not activate transcription on linear DNA. Probably not involved in DNA repair. The sequence is that of RNA polymerase-associated protein RapA from Pseudomonas aeruginosa (strain LESB58).